The sequence spans 367 residues: Voltage-gated potassium channel subunit beta-2 (367 aa).

Phosphoserine is present on residues Ser9, Ser14, and Ser20. Arg28 is subject to Asymmetric dimethylarginine; alternate. Omega-N-methylarginine; alternate is present on Arg28. At Ser31 the chain carries Phosphoserine. Residues Thr56, Trp57, Gln63, and Asp85 each contribute to the NADP(+) site. Tyr90 serves as the catalytic Proton donor/acceptor. Ser112 carries the phosphoserine modification. N6-acetyllysine is present on Lys124. 18 residues coordinate NADP(+): Asn158, Ser188, Arg189, Gln214, Trp243, Ser244, Pro245, Leu246, Ala247, Cys248, Lys254, Tyr262, Arg264, Gly323, Ser325, Gln329, Glu332, and Asn333.

This sequence belongs to the shaker potassium channel beta subunit family. In terms of assembly, homotetramer. Interaction with tetrameric potassium channel alpha subunits gives rise to a heterooctamer. Identified in potassium channel complexes containing KCNA1, KCNA2, KCNA4, KCNA5, KCNA6, KCNAB1, KCNAB2 and KCND3. Interacts (in unphosphorylated form) with MAPRE1. Forms a ternary complex with SQSTM1 and PRKCZ. Phosphorylated by PRKCZ; may be regulated by incorporation in a complex composed of PRKCZ and SQSTM1. In terms of tissue distribution, detected in the juxtaparanodal region of nodes of Ranvier in myelinated nerve fibers in the spinal cord (at protein level).

Its subcellular location is the cytoplasm. The protein resides in the membrane. The protein localises to the cell membrane. It localises to the cell projection. It is found in the axon. Its subcellular location is the synapse. The protein resides in the synaptosome. The protein localises to the cytoskeleton. The enzyme catalyses hydroxyacetone + NADP(+) = methylglyoxal + NADPH + H(+). It carries out the reaction (E)-4-oxonon-2-en-1-ol + NADP(+) = (E)-4-oxonon-2-enal + NADPH + H(+). Its function is as follows. Regulatory subunit of the voltage-gated potassium (Kv) Shaker channels composed of pore-forming and potassium-conducting alpha subunits and of regulatory beta subunits. The beta-2/KCNAB2 cytoplasmic subunit promotes potassium channel closure via a mechanism that does not involve physical obstruction of the channel pore. Promotes the inactivation of Kv1.4/KCNA4 and Kv1.5/KCNA5 alpha subunit-containing channels. Displays nicotinamide adenine dinucleotide phosphate (NADPH)-dependent aldoketoreductase activity by catalyzing the NADPH-dependent reduction of a wide range of aldehyde and ketone substrates. Substrate specificity includes methylglyoxal, 9,10-phenanthrenequinone, prostaglandin J2, 4-nitrobenzaldehyde, 4-nitroacetophenone and 4-oxo-trans-2-nonenal (in vitro, no physiological substrate identified yet). The binding of oxidized and reduced nucleotide alters Kv channel gating and may contribute to dynamic fine tuning of cell excitability. Contributes to the regulation of nerve signaling, and prevents neuronal hyperexcitability. This is Voltage-gated potassium channel subunit beta-2 (KCNAB2) from Bos taurus (Bovine).